Consider the following 614-residue polypeptide: Adenylate kinase 7 (614 aa).

Residues P258–G503 form an adenylate kinase region. A268 to S273 lines the ATP pocket. Residues K288 to L346 form an NMP region. The disordered stretch occupies residues D308–D327. Over residues E311–D327 the composition is skewed to acidic residues. AMP contacts are provided by residues E323–L346, G373–K376, and Q380. Positions K376–S568 form a coiled coil. Residues N428 to H438 form an LID region. R446 is a binding site for AMP. G478 is an ATP binding site. Residues P570 to Q614 form a DPY-30 region.

This sequence in the central section; belongs to the adenylate kinase family. It in the C-terminal section; belongs to the dpy-30 family.

The protein localises to the cytoplasm. It is found in the cytosol. The protein resides in the cell projection. It localises to the cilium. Its subcellular location is the flagellum. The catalysed reaction is AMP + ATP = 2 ADP. It carries out the reaction a 2'-deoxyribonucleoside 5'-diphosphate + ATP = a 2'-deoxyribonucleoside 5'-triphosphate + ADP. The enzyme catalyses a ribonucleoside 5'-diphosphate + ATP = a ribonucleoside 5'-triphosphate + ADP. Its function is as follows. Nucleoside monophosphate (NMP) kinase that catalyzes the reversible transfer of the terminal phosphate group between nucleoside triphosphates and monophosphates. Has highest activity toward AMP, and weaker activity toward dAMP, CMP and dCMP. Also displays broad nucleoside diphosphate kinase activity. Involved in maintaining ciliary structure and function. The protein is Adenylate kinase 7 (Ak7) of Mus musculus (Mouse).